The primary structure comprises 78 residues: Large ribosomal subunit protein bL28 (78 aa).

Positions 1–25 (MSRVCQVTGKRPAVGNNRSHAKNAT) are disordered.

It belongs to the bacterial ribosomal protein bL28 family.

The sequence is that of Large ribosomal subunit protein bL28 from Vibrio cholerae serotype O1 (strain ATCC 39541 / Classical Ogawa 395 / O395).